The primary structure comprises 338 residues: Heme A synthase (338 aa).

5 helical membrane-spanning segments follow: residues 6–26 (ITKW…IGGI), 93–113 (GRIT…KGII), 118–138 (IAPY…GWYM), 154–174 (LAFH…QLIK), and 201–221 (VIYL…GLIY). His-256 is a binding site for heme. The next 3 helical transmembrane spans lie at 258 to 278 (LGGY…LKIE), 285 to 305 (IAYF…ITLL), and 308 to 328 (VPII…SVII). His-316 provides a ligand contact to heme.

The protein belongs to the COX15/CtaA family. Type 2 subfamily. Interacts with CtaB. The cofactor is heme b.

The protein resides in the cell membrane. The enzyme catalyses Fe(II)-heme o + 2 A + H2O = Fe(II)-heme a + 2 AH2. The protein operates within porphyrin-containing compound metabolism; heme A biosynthesis; heme A from heme O: step 1/1. Catalyzes the conversion of heme O to heme A by two successive hydroxylations of the methyl group at C8. The first hydroxylation forms heme I, the second hydroxylation results in an unstable dihydroxymethyl group, which spontaneously dehydrates, resulting in the formyl group of heme A. This is Heme A synthase from Rickettsia canadensis (strain McKiel).